Consider the following 549-residue polypeptide: Efflux pump patC (549 aa).

A compositionally biased stretch (polar residues) spans 1-12 (MAESTAHTSPSL). Positions 1–40 (MAESTAHTSPSLNDKEREVDQGILSDESGPAEEVKETPDQ) are disordered. The next 14 helical transmembrane spans lie at 50–70 (LLIC…NTIV), 85–105 (AQLG…ILPL), 116–136 (WLFI…GGAP), 146–166 (VWAG…ITIL), 178–198 (LVGL…GAFA), 206–226 (WGFY…VFLL), 252–272 (VLSA…GVMW), 282–302 (LYVV…FCVL), 321–341 (IALY…VYYI), 360–380 (LLPF…LMPK), 385–405 (VLWY…MYTV), 419–439 (ILLG…PSLV), 460–482 (LLGL…NALL), and 526–546 (VYVM…FLPW).

This sequence belongs to the major facilitator superfamily. TCR/Tet family.

It localises to the vacuole membrane. Its subcellular location is the cell membrane. Efflux pump; part of the gene cluster that mediates the biosynthesis of patulin, an acetate-derived tetraketide mycotoxin produced by several fungal species that shows antimicrobial properties against several bacteria. May be involved in the secretion of E-ascladiol to be converted to patulin by the secreted patulin synthase patE. This Aspergillus clavatus (strain ATCC 1007 / CBS 513.65 / DSM 816 / NCTC 3887 / NRRL 1 / QM 1276 / 107) protein is Efflux pump patC.